We begin with the raw amino-acid sequence, 441 residues long: Glutamyl-tRNA reductase (441 aa).

Substrate contacts are provided by residues 49 to 52, serine 109, 114 to 116, and glutamine 120; these read TCNR and EDQ. The active-site Nucleophile is cysteine 50. 190–195 serves as a coordination point for NADP(+); sequence GAGKMS.

It belongs to the glutamyl-tRNA reductase family. As to quaternary structure, homodimer.

It catalyses the reaction (S)-4-amino-5-oxopentanoate + tRNA(Glu) + NADP(+) = L-glutamyl-tRNA(Glu) + NADPH + H(+). It functions in the pathway porphyrin-containing compound metabolism; protoporphyrin-IX biosynthesis; 5-aminolevulinate from L-glutamyl-tRNA(Glu): step 1/2. Its function is as follows. Catalyzes the NADPH-dependent reduction of glutamyl-tRNA(Glu) to glutamate 1-semialdehyde (GSA). The polypeptide is Glutamyl-tRNA reductase (Moorella thermoacetica (strain ATCC 39073 / JCM 9320)).